A 37-amino-acid polypeptide reads, in one-letter code: Cytochrome b6-f complex subunit 5 (37 aa).

The helical transmembrane segment at 5–25 threads the bilayer; that stretch reads FLFGIVLGLIPITLTGLFVTA.

Belongs to the PetG family. The 4 large subunits of the cytochrome b6-f complex are cytochrome b6, subunit IV (17 kDa polypeptide, PetD), cytochrome f and the Rieske protein, while the 4 small subunits are PetG, PetL, PetM and PetN. The complex functions as a dimer.

It localises to the plastid. The protein resides in the chloroplast thylakoid membrane. Component of the cytochrome b6-f complex, which mediates electron transfer between photosystem II (PSII) and photosystem I (PSI), cyclic electron flow around PSI, and state transitions. PetG is required for either the stability or assembly of the cytochrome b6-f complex. The sequence is that of Cytochrome b6-f complex subunit 5 from Phalaenopsis aphrodite subsp. formosana (Moth orchid).